The chain runs to 478 residues: Glycogen synthase (478 aa).

Residue Lys20 participates in ADP-alpha-D-glucose binding.

It belongs to the glycosyltransferase 1 family. Bacterial/plant glycogen synthase subfamily.

It carries out the reaction [(1-&gt;4)-alpha-D-glucosyl](n) + ADP-alpha-D-glucose = [(1-&gt;4)-alpha-D-glucosyl](n+1) + ADP + H(+). It functions in the pathway glycan biosynthesis; glycogen biosynthesis. Its function is as follows. Synthesizes alpha-1,4-glucan chains using ADP-glucose. This is Glycogen synthase from Cereibacter sphaeroides (strain ATCC 17025 / ATH 2.4.3) (Rhodobacter sphaeroides).